The following is a 248-amino-acid chain: Protein STPG4 (248 aa).

Interacts with histone H3. Interacts with histone H4.

The protein localises to the cytoplasm. The protein resides in the nucleus. Functionally, maternal factor that plays a role in epigenetic chromatin reprogramming during early development of the zygote. Involved in the regulation of gametic DNA demethylation by inducing the conversion of the modified genomic base 5-methylcytosine (5mC) into 5-hydroxymethylcytosine (5hmC). The chain is Protein STPG4 from Homo sapiens (Human).